Here is a 291-residue protein sequence, read N- to C-terminus: MDKKAKIYTWSHIILIVFSLVCLHWFFILSITIPNQTGFLINRVGQWINSSSTYAYKIDPRSLFYLNYTLNFNIALNASGIASIVLFICYILTFIFNLIMIGIIRSWRPSLLHLIIAILIWLAILYLFIIIMIKPNFNQIINNSYYTWLKNVIFNDQTLTLNKKNVILNTYINHYHLPIINDPQVALLDISKHQINNENLTFNPSYNYNANLYFTKAKLIYCTYTIIGIIFIISFIYYLSEIIKRCLLVNDNWKIKQHERKDGLNIKKRKNKQEIVAPDPILEEIFKELDL.

4 consecutive transmembrane segments (helical) span residues 13 to 33 (IILIVFSLVCLHWFFILSITI), 84 to 104 (IVLFICYILTFIFNLIMIGII), 111 to 131 (LLHLIIAILIWLAILYLFIII), and 219 to 239 (LIYCTYTIIGIIFIISFIYYL).

The protein localises to the cell membrane. This is an uncharacterized protein from Ureaplasma parvum serovar 3 (strain ATCC 700970).